The primary structure comprises 540 residues: Ubiquitin carboxyl-terminal hydrolase 17-like protein E (540 aa).

A disordered region spans residues 1-22 (MVVSLSFPEETGGENLPSAPLE). One can recognise a USP domain in the interval 85 to 382 (CGLQNTGNSC…NAYVLFYVQQ (298 aa)). Residue C94 is the Nucleophile of the active site. Catalysis depends on H341, which acts as the Proton acceptor. Composition is skewed to basic and acidic residues over residues 431–441 (NREKRAKKETS) and 508–520 (APDK…HNGD). Disordered regions lie at residues 431–461 (NREK…QKHG) and 499–540 (RSTA…QGGR). Residues 523–540 (LTSQGLMSPGQLCSQGGR) are compositionally biased toward polar residues.

Belongs to the peptidase C19 family. USP17 subfamily. Interacts with SUDS3; the interaction is direct.

It localises to the nucleus. It is found in the endoplasmic reticulum. It catalyses the reaction Thiol-dependent hydrolysis of ester, thioester, amide, peptide and isopeptide bonds formed by the C-terminal Gly of ubiquitin (a 76-residue protein attached to proteins as an intracellular targeting signal).. Functionally, deubiquitinating enzyme that removes conjugated ubiquitin from specific proteins to regulate different cellular processes that may include cell proliferation, progression through the cell cycle, apoptosis, cell migration, and the cellular response to viral infection. This is Ubiquitin carboxyl-terminal hydrolase 17-like protein E (Usp17le) from Mus musculus (Mouse).